A 117-amino-acid polypeptide reads, in one-letter code: Large ribosomal subunit protein uL18 (117 aa).

The protein belongs to the universal ribosomal protein uL18 family. Part of the 50S ribosomal subunit; part of the 5S rRNA/L5/L18/L25 subcomplex. Contacts the 5S and 23S rRNAs.

In terms of biological role, this is one of the proteins that bind and probably mediate the attachment of the 5S RNA into the large ribosomal subunit, where it forms part of the central protuberance. This is Large ribosomal subunit protein uL18 from Tolumonas auensis (strain DSM 9187 / NBRC 110442 / TA 4).